The chain runs to 468 residues: FAD-linked oxidoreductase azaG (468 aa).

Positions 1 to 16 are cleaved as a signal peptide; it reads MQLSGILSWLLSWLWA. N-linked (GlcNAc...) asparagine glycosylation occurs at Asn-44. In terms of domain architecture, FAD-binding PCMH-type spans 54–228; the sequence is TVHGAPHYLG…TSATYRTHQA (175 aa). N-linked (GlcNAc...) asparagine glycans are attached at residues Asn-272, Asn-348, and Asn-464.

The protein belongs to the oxygen-dependent FAD-linked oxidoreductase family. FAD is required as a cofactor.

The protein operates within secondary metabolite biosynthesis. Functionally, FAD-linked oxidoreductase; part of the gene cluster that mediates the biosynthesis of azaphilones, a class of fungal metabolites characterized by a highly oxygenated pyrano-quinone bicyclic core and exhibiting a broad range of bioactivities. In the first step, the non-reducing polyketide synthase azaA forms the hexaketide precursor from successive condensations of five malonyl-CoA units, presumably with a simple acetyl-CoA starter unit. The reactive polyketide chain then undergoes a PT-mediated C2-C7 cyclization to afford the aromatic ring and is eventually released as an aldehyde through the R-domain. The putative ketoreductase azaE is proposed to catalyze the reduction of the terminal ketone resulting in the early culture product FK17-P2a. The monooxygenase azaH was demonstrated to be the only enzyme required to convert FK17-P2a to azanigerone E. AzaH first hydroxylates the benzaldehyde intermediate FK17-P2a at C4, which triggers the formation of the pyran-ring to afford azanigerone E. In parallel, the 2,4-dimethylhexanoyl chain is synthesized by the HR-PKS azaB and is proposed to be transferred to the C4-hydroxyl of azanigerone E by the acyltransferase azaD directly from the ACP domain of azaB. Alternatively, the 2,4-dimethyl-hexanoyl chain may be offloaded from the HR-PKS as a carboxylic acid and converted to an acyl-CoA by azaF. The resulting acyl-CoA molecule could then be taken up as a substrate by AzaD to form azanigerone B. To yield the carboxylic acid substituent in azanigerone A, the hydroxypropyl side chain of azanigerone B would need to undergo a C-C oxidative cleavage catalyzed by cytochrome P450 AzaI. AzaI is proposed to act on a vicinal diol that leads to a C-C bond scission either through an alkoxyradical intermediate or a peroxy complex. In the biosynthesis of azanigerone A, azanigerone B first undergoes hydroxylation at C10, possibly catalyzed by one of the two FAD-dependent monooxygenases encoded in the cluster, azaG or azaL, resulting in the vicinal diol azanigerone C. Oxidative cleavage of azanigerone C by azaI would yield the corresponding aldehyde derivative of azanigerone A. Finally, the dehydrogenase azaJ is proposed to convert the aldehyde functional group into the carboxylic acid, completing the conversion from azanigerone B to azanigerone A. Alternatively, the oxidation of aldehyde to carboxylic acid may be catalyzed by the same P450 enzyme azaI via consecutive oxidation or by endogenous alcohol dehydrogenase. The sequence is that of FAD-linked oxidoreductase azaG from Aspergillus niger (strain ATCC 1015 / CBS 113.46 / FGSC A1144 / LSHB Ac4 / NCTC 3858a / NRRL 328 / USDA 3528.7).